The following is a 546-amino-acid chain: Chaperonin GroEL (546 aa).

ATP is bound by residues 29–32, Lys-50, 86–90, Gly-415, and Asp-495; these read TLGP and DGTTT. The tract at residues 526 to 546 is disordered; it reads EDNAGGGGMPQGMGGGMPGMM. Residues 529 to 546 show a composition bias toward gly residues; it reads AGGGGMPQGMGGGMPGMM.

It belongs to the chaperonin (HSP60) family. Forms a cylinder of 14 subunits composed of two heptameric rings stacked back-to-back. Interacts with the co-chaperonin GroES.

It is found in the cytoplasm. The enzyme catalyses ATP + H2O + a folded polypeptide = ADP + phosphate + an unfolded polypeptide.. Functionally, together with its co-chaperonin GroES, plays an essential role in assisting protein folding. The GroEL-GroES system forms a nano-cage that allows encapsulation of the non-native substrate proteins and provides a physical environment optimized to promote and accelerate protein folding. This chain is Chaperonin GroEL, found in Christiangramia forsetii (strain DSM 17595 / CGMCC 1.15422 / KT0803) (Gramella forsetii).